Here is a 397-residue protein sequence, read N- to C-terminus: tRNA(Ile)-lysidine synthase (397 aa).

Ser44 to Ser49 lines the ATP pocket.

This sequence belongs to the tRNA(Ile)-lysidine synthase family.

It localises to the cytoplasm. It carries out the reaction cytidine(34) in tRNA(Ile2) + L-lysine + ATP = lysidine(34) in tRNA(Ile2) + AMP + diphosphate + H(+). Functionally, ligates lysine onto the cytidine present at position 34 of the AUA codon-specific tRNA(Ile) that contains the anticodon CAU, in an ATP-dependent manner. Cytidine is converted to lysidine, thus changing the amino acid specificity of the tRNA from methionine to isoleucine. The polypeptide is tRNA(Ile)-lysidine synthase (Rhodopirellula baltica (strain DSM 10527 / NCIMB 13988 / SH1)).